The chain runs to 473 residues: uncharacterized protein (473 aa).

A signal peptide spans 1-19 (MIRAFLVFPYLYILVQSNG).

This is an uncharacterized protein from Methanocaldococcus jannaschii (strain ATCC 43067 / DSM 2661 / JAL-1 / JCM 10045 / NBRC 100440) (Methanococcus jannaschii).